Here is a 948-residue protein sequence, read N- to C-terminus: RNA polymerase-associated protein RapA (948 aa).

Residues 164 to 332 (EVADRIAPRV…FARLRLLDPN (169 aa)) form the Helicase ATP-binding domain. 177-184 (DEVGLGKT) contacts ATP. The short motif at 278-281 (DEAH) is the DEAH box element. A Helicase C-terminal domain is found at 473-627 (RVDWLIDTLK…TCPTGNALQH (155 aa)).

It belongs to the SNF2/RAD54 helicase family. RapA subfamily. In terms of assembly, interacts with the RNAP. Has a higher affinity for the core RNAP than for the holoenzyme. Its ATPase activity is stimulated by binding to RNAP.

Transcription regulator that activates transcription by stimulating RNA polymerase (RNAP) recycling in case of stress conditions such as supercoiled DNA or high salt concentrations. Probably acts by releasing the RNAP, when it is trapped or immobilized on tightly supercoiled DNA. Does not activate transcription on linear DNA. Probably not involved in DNA repair. The sequence is that of RNA polymerase-associated protein RapA from Pseudomonas savastanoi pv. phaseolicola (strain 1448A / Race 6) (Pseudomonas syringae pv. phaseolicola (strain 1448A / Race 6)).